A 132-amino-acid polypeptide reads, in one-letter code: Agouti-signaling protein (132 aa).

Positions 1–22 are cleaved as a signal peptide; the sequence is MDVTRLLLATLLVFLCFFTAYS. N-linked (GlcNAc...) asparagine glycosylation is present at asparagine 39. Positions 61–87 are disordered; the sequence is QISRKEAEKKRSSKKEASMKKVARPRT. Basic and acidic residues predominate over residues 63 to 79; sequence SRKEAEKKRSSKKEASM. Cystine bridges form between cysteine 93-cysteine 108, cysteine 100-cysteine 114, cysteine 107-cysteine 125, cysteine 111-cysteine 132, and cysteine 116-cysteine 123. The 40-residue stretch at 93-132 folds into the Agouti domain; that stretch reads CVATRDSCKPPAPACCDPCASCQCRFFRSACSCRVLSLNC.

The protein resides in the secreted. Functionally, involved in the regulation of melanogenesis. The binding of ASP to MC1R precludes alpha-MSH initiated signaling and thus blocks production of cAMP, leading to a down-regulation of eumelanogenesis (brown/black pigment) and thus increasing synthesis of pheomelanin (yellow/red pigment). This is Agouti-signaling protein (ASIP) from Macaca maura (Moor macaque).